We begin with the raw amino-acid sequence, 791 residues long: Genome polyprotein (791 aa).

The tract at residues 1–15 is interaction with host EXOC1; the sequence is MNNQRKKTGRPSFNM. Topologically, residues 1–101 are cytoplasmic; it reads MNNQRKKTGR…LNIMNRRKRS (101 aa). Residues 37 to 72 are hydrophobic; homodimerization of capsid protein C; that stretch reads LLSGQGPMKLVMAFIAFLRFLAIPPTAGILARWSSF. Residues 101-114 constitute a propeptide, ER anchor for the capsid protein C, removed in mature form by serine protease NS3; the sequence is SVTMLLMLLPTALA. The helical transmembrane segment at 102–119 threads the bilayer; the sequence is VTMLLMLLPTALAFHLTT. Over 120 to 242 the chain is Extracellular; sequence RGGEPTLIVS…QIQKVETWAL (123 aa). The N-linked (GlcNAc...) asparagine; by host glycan is linked to N183. A helical transmembrane segment spans residues 243-260; the sequence is RHPGFTVIGLFLAHAIGT. A topological domain (cytoplasmic) is located at residue S261. Residues 262 to 280 traverse the membrane as a helical segment; it reads ITQKGIIFILLMLVTPSMA. Topologically, residues 281 to 725 are extracellular; that stretch reads MRCVGIGNRD…IHQIFGTAYG (445 aa). Intrachain disulfides connect C283–C310, C340–C401, C354–C385, and C372–C396. Residue N347 is glycosylated (N-linked (GlcNAc...) asparagine; by host). Residues 378-391 are fusion peptide; sequence DRGWGNGCGLFGKG. N-linked (GlcNAc...) asparagine; by host glycosylation is present at N433. Disulfide bonds link C465–C565 and C582–C613. The chain crosses the membrane as a helical span at residues 726-746; that stretch reads ILFSGVSWTMKIGIGILLTWL. At 747–752 the chain is on the cytoplasmic side; sequence GLNSRS. Residues 753–775 form a helical membrane-spanning segment; that stretch reads TSLSMTCIAVGMVTLYLGVMVQA. Over 776-791 the chain is Extracellular; sequence DSGCVINWKGKELKCG. A disulfide bridge links C779 with C790.

Homodimer. Interacts (via N-terminus) with host EXOC1 (via C-terminus); this interaction results in EXOC1 degradation through the proteasome degradation pathway. As to quaternary structure, forms heterodimers with envelope protein E in the endoplasmic reticulum and Golgi. In terms of assembly, homodimer; in the endoplasmic reticulum and Golgi. Interacts with protein prM. Interacts with non-structural protein 1. Homodimer; Homohexamer when secreted. Interacts with envelope protein E. Post-translationally, specific enzymatic cleavages in vivo yield mature proteins. Cleavages in the lumen of endoplasmic reticulum are performed by host signal peptidase, wereas cleavages in the cytoplasmic side are performed by serine protease NS3. Signal cleavage at the 2K-4B site requires a prior NS3 protease-mediated cleavage at the 4A-2K site. In terms of processing, N-glycosylated. N-glycosylated. The excreted form is glycosylated and this is required for efficient secretion of the protein from infected cells.

Its subcellular location is the virion. The protein localises to the host nucleus. It is found in the host cytoplasm. It localises to the host perinuclear region. The protein resides in the secreted. Its subcellular location is the virion membrane. The protein localises to the host endoplasmic reticulum membrane. Functionally, plays a role in virus budding by binding to the cell membrane and gathering the viral RNA into a nucleocapsid that forms the core of a mature virus particle. During virus entry, may induce genome penetration into the host cytoplasm after hemifusion induced by the surface proteins. Can migrate to the cell nucleus where it modulates host functions. Overcomes the anti-viral effects of host EXOC1 by sequestering and degrading the latter through the proteasome degradation pathway. Inhibits RNA silencing by interfering with host Dicer. Its function is as follows. Prevents premature fusion activity of envelope proteins in trans-Golgi by binding to envelope protein E at pH6.0. After virion release in extracellular space, gets dissociated from E dimers. In terms of biological role, acts as a chaperone for envelope protein E during intracellular virion assembly by masking and inactivating envelope protein E fusion peptide. prM is the only viral peptide matured by host furin in the trans-Golgi network probably to avoid catastrophic activation of the viral fusion activity in acidic GolGi compartment prior to virion release. prM-E cleavage is inefficient, and many virions are only partially matured. These uncleaved prM would play a role in immune evasion. Functionally, may play a role in virus budding. Exerts cytotoxic effects by activating a mitochondrial apoptotic pathway through M ectodomain. May display a viroporin activity. Binds to host cell surface receptor and mediates fusion between viral and cellular membranes. Envelope protein is synthesized in the endoplasmic reticulum in the form of heterodimer with protein prM. They play a role in virion budding in the ER, and the newly formed immature particle is covered with 60 spikes composed of heterodimer between precursor prM and envelope protein E. The virion is transported to the Golgi apparatus where the low pH causes dissociation of PrM-E heterodimers and formation of E homodimers. prM-E cleavage is inefficient, and many virions are only partially matured. These uncleaved prM would play a role in immune evasion. Its function is as follows. Involved in immune evasion, pathogenesis and viral replication. Once cleaved off the polyprotein, is targeted to three destinations: the viral replication cycle, the plasma membrane and the extracellular compartment. Essential for viral replication. Required for formation of the replication complex and recruitment of other non-structural proteins to the ER-derived membrane structures. Excreted as a hexameric lipoparticle that plays a role against host immune response. Antagonizing the complement function. Binds to the host macrophages and dendritic cells. Inhibits signal transduction originating from Toll-like receptor 3 (TLR3). In terms of biological role, disrupts the host endothelial glycocalyx layer of host pulmonary microvascular endothelial cells, inducing degradation of sialic acid and shedding of heparan sulfate proteoglycans. NS1 induces expression of sialidases, heparanase, and activates cathepsin L, which activates heparanase via enzymatic cleavage. These effects are probably linked to the endothelial hyperpermeability observed in severe dengue disease. The chain is Genome polyprotein from Dengue virus type 1 (strain Jamaica/CV1636/1977) (DENV-1).